Reading from the N-terminus, the 106-residue chain is Flagellar transcriptional regulator FlhD (106 aa).

The protein belongs to the FlhD family. As to quaternary structure, homodimer; disulfide-linked. Forms a heterohexamer composed of two FlhC and four FlhD subunits. Each FlhC binds a FlhD dimer, forming a heterotrimer, and a hexamer assembles by dimerization of two heterotrimers.

The protein resides in the cytoplasm. Functionally, functions in complex with FlhC as a master transcriptional regulator that regulates transcription of several flagellar and non-flagellar operons by binding to their promoter region. Activates expression of class 2 flagellar genes, including fliA, which is a flagellum-specific sigma factor that turns on the class 3 genes. Also regulates genes whose products function in a variety of physiological pathways. The polypeptide is Flagellar transcriptional regulator FlhD (Burkholderia pseudomallei (strain 1710b)).